The following is a 527-amino-acid chain: Cytokinin dehydrogenase 3 (527 aa).

An N-terminal signal peptide occupies residues 1–22 (MEVAMVCTRVNLLILILSLCSP). Residues 52 to 231 (LFHSPSAVLK…TRARILLQEA (180 aa)) enclose the FAD-binding PCMH-type domain. The FAD site is built by Ala-87, Gly-89, and Gly-91. His-92 carries the post-translational modification Pros-8alpha-FAD histidine. FAD contacts are provided by Ser-93, Gln-97, Asp-155, Thr-160, Ser-166, Ile-170, and Ile-221. Residue Asn-413 is glycosylated (N-linked (GlcNAc...) asparagine). FAD-binding residues include Tyr-471 and Gln-509.

The protein belongs to the oxygen-dependent FAD-linked oxidoreductase family. As to quaternary structure, monomer. FAD is required as a cofactor. As to expression, expressed in inflorescence meristems. Highly expressed in lamina joints, and mainly in the parenchyma cells and vascular bundles on the abaxial side of the lamina joint. Expressed in roots, stems, leaves and young panicles.

It localises to the endoplasmic reticulum. The enzyme catalyses N(6)-dimethylallyladenine + A + H2O = 3-methyl-2-butenal + adenine + AH2. Catalyzes the oxidation of cytokinins, a family of N(6)-substituted adenine derivatives, where the substituent is an isopentenyl group. Cytokinins are plant hormones essential for plant growth, development, and stress responses. Exhibits specific activities toward trans-zeatin (tZ) and isopentenyladenine (iP). Plays a role in lamina joint inclination. Regulates cell proliferation and vascular bundle number on the abaxial side of lamina joint. In Oryza sativa subsp. japonica (Rice), this protein is Cytokinin dehydrogenase 3.